Reading from the N-terminus, the 360-residue chain is DNA replication and repair protein RecF (360 aa).

Residue 30 to 37 (GQNGSGKT) coordinates ATP.

Belongs to the RecF family.

It is found in the cytoplasm. The RecF protein is involved in DNA metabolism; it is required for DNA replication and normal SOS inducibility. RecF binds preferentially to single-stranded, linear DNA. It also seems to bind ATP. The polypeptide is DNA replication and repair protein RecF (Shewanella oneidensis (strain ATCC 700550 / JCM 31522 / CIP 106686 / LMG 19005 / NCIMB 14063 / MR-1)).